Reading from the N-terminus, the 196-residue chain is UPF0056 membrane protein BUsg_434 (196 aa).

The next 6 membrane-spanning stretches (helical) occupy residues 8-28, 45-65, 71-91, 105-125, 134-154, and 174-194; these read TILL…MTIL, IIAL…LTIL, TVSI…IFPS, FLVP…TLML, MPYL…ILLL, and MGLI…KAWF.

Belongs to the UPF0056 (MarC) family.

It localises to the cell membrane. The sequence is that of UPF0056 membrane protein BUsg_434 from Buchnera aphidicola subsp. Schizaphis graminum (strain Sg).